The primary structure comprises 626 residues: MPSIAKLPDIVANKISAGEVVQRPASVVKELLENSIDSGASAITVVIKEAGRQLVRIIDNGCGMDSDDALLSVERFATSKISDVDDLNALRTLGFRGEALASISSVSHFELKTRRQSEPVGIQLISNGGEIEGPQPAQCEPGTSISVRNLFFNVPARRKFLKSNATEFKHIHETVKAFVLAYPEIEWRLINDDHELFYFRTPDVRERLSHFYGEGFGESLIEVTEENDYMTIGGYLGKPGMMVRQKYDQYFYINRRLIQNRMLVQAVQQAYAELLEERQSPFALLFLGLDPSLVDVNVHPAKLEVKFEDEKSIRSMVYPVVKRAVRTADFSPEATVAPSPAPVGSHGIGLPESSSRKLAYSDFSGKSSTTGDLYRNYRQGAFDLSGASVPPPSIDPVESSFGSGSGEPYPSMVQESLLTPSADQPSAADEQNPVAPDKEPKIWQLHNKYIICQIKTGLMIIDQHVAHERVLYERAIDVMNEAVPNSQQLLFPQKIDLKPWQYEVYEEISEELYRLGFTIRPFGGLSVMIEGVPPDVRDGNEATILQDMIAEYQENASKLKLEKRDNLAKSYSCRNAIMTGQKLDVEQMRMLIDRLFATRMPYVCPHGRPVIIRLSLGELDRMFGRT.

Disordered regions lie at residues 385-413 and 418-437; these read SGASVPPPSIDPVESSFGSGSGEPYPSMV and LTPSADQPSAADEQNPVAPD.

It belongs to the DNA mismatch repair MutL/HexB family.

Its function is as follows. This protein is involved in the repair of mismatches in DNA. It is required for dam-dependent methyl-directed DNA mismatch repair. May act as a 'molecular matchmaker', a protein that promotes the formation of a stable complex between two or more DNA-binding proteins in an ATP-dependent manner without itself being part of a final effector complex. This chain is DNA mismatch repair protein MutL, found in Chlorobaculum parvum (strain DSM 263 / NCIMB 8327) (Chlorobium vibrioforme subsp. thiosulfatophilum).